The primary structure comprises 653 residues: Testicular spindle-associated protein SHCBP1L (653 aa).

The tract at residues 1–65 (MASGSKASVP…PVKGKAGRET (65 aa)) is disordered. A Phosphoserine modification is found at S8. Over residues 28 to 41 (SAVSGDTAAATTLK) the composition is skewed to polar residues. Positions 46–56 (PVRSVVASPRP) are enriched in low complexity. S53 is subject to Phosphoserine. A coiled-coil region spans residues 299–326 (IAQRFKKTLEKYKNKRVELIEYQSNIKE). PbH1 repeat units lie at residues 493 to 514 (SGHMTLENCILKCEGTGVCVLT), 515 to 537 (GAALTITDSEITGAQGAGVELYP), 538 to 571 (GSIAILERNEIHHCNNLRTSNSSKSTLGGVNMKV), and 574 to 596 (APKLKMTNNHIYSNKGYGVSILQ). At K570 the chain carries N6-acetyllysine. K645 bears the N6-acetyllysine mark.

As to quaternary structure, interacts with HSPA2; this interaction may promote the recruitment of HSPA2 to the spindle. In terms of tissue distribution, expressed in spermatocytes and elongating spermatids inside the seminiferous tubules (at protein level). Testis-specific.

The protein localises to the cytoplasm. Its subcellular location is the cytoskeleton. The protein resides in the spindle. Its function is as follows. Testis-specific spindle-associated factor that plays a role in spermatogenesis. In association with HSPA2, participates in the maintenance of spindle integrity during meiosis in male germ cells. This Homo sapiens (Human) protein is Testicular spindle-associated protein SHCBP1L.